A 709-amino-acid chain; its full sequence is Phosphoprotein (709 aa).

Positions 1-35 are N0 binding; sequence MDKLELVNDGLNIIDFIQKNQKEIQKTYGRSSIQQ. The disordered stretch occupies residues 53-92; it reads SGESEQVEGGMSKDDGDVERRNLEDLSSTSPTDGTIGKRV. Basic and acidic residues predominate over residues 63–76; that stretch reads MSKDDGDVERRNLE. Residues 110–140 are interaction with host STAT1; that stretch reads VVTDVVYHDHGGECTGYGFTSSPERGWSDYT. S257 is subject to Phosphoserine; by host. The tract at residues 265–324 is disordered; it reads ISPEDEEPSSVGGKPNESIGRTIEGQSIRDNLQAKDNKSTDVPGAGPKDSAVKEEPPQKR. S350 is subject to Phosphoserine; by host. A disordered region spans residues 384–473; that stretch reads VQTADRQRPG…VNPVDDNDSL (90 aa). Polar residues-rich tracts occupy residues 416–426 and 444–456; these read GTENVPGSKSG and NAENVQLNASTAV. The multimerization stretch occupies residues 475-580; that stretch reads DKYIMPSDDF…LVSMMIMIPG (106 aa).

As to quaternary structure, homotetramer. Interacts (via multimerization domain) with polymerase L; this interaction forms the polymerase L-P complex. Interacts (via N-terminus) with N0 (via Ncore); this interaction allows P to chaperon N0 to avoid N polymerization before encapsidation. Interacts (via C-terminus) with N-RNA template (via C-terminus); this interaction positions the polymerase on the template for both transcription and replication. Interacts with host STAT1.

The protein resides in the virion. It is found in the host cytoplasm. Essential cofactor of the RNA polymerase L that plays a central role in the transcription and replication by forming the polymerase complex with RNA polymerase L and recruiting L to the genomic N-RNA template for RNA synthesis. Also plays a central role in the encapsidation of nascent RNA chains by forming the encapsidation complex with the nucleocapsid protein N (N-P complex). Acts as a chaperone for newly synthesized free N protein, so-called N0, allowing encapsidation of nascent RNA chains during replication. The nucleoprotein protein N prevents excessive phosphorylation of P, which leads to down-regulation of viral transcription/ replication. Participates, together with N, in the formation of viral factories (viroplasms), which are large inclusions in the host cytoplasm where replication takes place. In Nipah virus, this protein is Phosphoprotein (P/V/C).